A 358-amino-acid polypeptide reads, in one-letter code: Polyadenylate-binding protein-interacting protein 11 (358 aa).

Residues 1 to 19 (MAVVETGAAATAADAGGVV) show a composition bias toward low complexity. The interval 1–45 (MAVVETGAAATAADAGGVVIQPPPSSPPSSMTSQDSGVSSDDQNH) is disordered. Positions 31–41 (MTSQDSGVSSD) are enriched in polar residues. A PAM2-like motif is present at residues 92 to 102 (KLNPMAEEFVP). The tract at residues 136 to 164 (GGYGNENGGFRRKKSFGQGKRRMNARTSM) is disordered. The span at 145-159 (FRRKKSFGQGKRRMN) shows a compositional bias: basic residues. A Bipartite nuclear localization signal motif is present at residues 146–157 (RRKKSFGQGKRR). 2 RRM domains span residues 173-248 (RTVY…PSKT) and 270-346 (RTIY…PSKT).

As to expression, expressed in cauline leaves, stems, immature siliques and primary inflorescences.

It localises to the nucleus. The protein is Polyadenylate-binding protein-interacting protein 11 (CID11) of Arabidopsis thaliana (Mouse-ear cress).